The sequence spans 227 residues: NAD(P)H-hydrate epimerase (227 aa).

One can recognise a YjeF N-terminal domain in the interval 12 to 221; that stretch reads SRLVDELAIA…DIGVPRALLE (210 aa). 59 to 63 lines the (6S)-NADPHX pocket; the sequence is NNGGD. Residues Asn60 and Asp131 each coordinate K(+). Residues 135-141 and Asp164 contribute to the (6S)-NADPHX site; that span reads GTGATGE. A K(+)-binding site is contributed by Thr167.

The protein belongs to the NnrE/AIBP family. Requires K(+) as cofactor.

The enzyme catalyses (6R)-NADHX = (6S)-NADHX. It carries out the reaction (6R)-NADPHX = (6S)-NADPHX. Functionally, catalyzes the epimerization of the S- and R-forms of NAD(P)HX, a damaged form of NAD(P)H that is a result of enzymatic or heat-dependent hydration. This is a prerequisite for the S-specific NAD(P)H-hydrate dehydratase to allow the repair of both epimers of NAD(P)HX. In Pirellula staleyi (strain ATCC 27377 / DSM 6068 / ICPB 4128) (Pirella staleyi), this protein is NAD(P)H-hydrate epimerase.